We begin with the raw amino-acid sequence, 208 residues long: MARYTGPTCKLARREGTDLFLKSGIRSLDSKCNVTQLPGMHGANARRQKGTEYGLQLREKQKVRRIYGILEKQFRLYYKKASQKKGSTGENLLSLLECRLDNVVYRMGFGSTRAEARQLVSHKSILMNGLVVNIPSYQVSVNDEISIREKAKKQSRIQLALELAEQSTQPQWLDIDHKALKGVFKNVPARDELSSDIQEHLIVELYSK.

An S4 RNA-binding domain is found at 98–160 (CRLDNVVYRM…AKKQSRIQLA (63 aa)).

This sequence belongs to the universal ribosomal protein uS4 family. As to quaternary structure, part of the 30S ribosomal subunit. Contacts protein S5. The interaction surface between S4 and S5 is involved in control of translational fidelity.

Functionally, one of the primary rRNA binding proteins, it binds directly to 16S rRNA where it nucleates assembly of the body of the 30S subunit. Its function is as follows. With S5 and S12 plays an important role in translational accuracy. The sequence is that of Small ribosomal subunit protein uS4 from Ruthia magnifica subsp. Calyptogena magnifica.